We begin with the raw amino-acid sequence, 198 residues long: MTNADNINEPRLIVETGLDQRIAAIIEPVIVGMDYRLVRVRLMNQNGLTLQVMAERNDGSMNVQGCEEISTAISPVLDVEDPVDKAYHLEVSSPGIDRPMVRKSDFVRWNGHIVKCETSILVDNRKRFRGKITDVNDDGFTIERDQVAYGEEPKVTIPFSTLAEAKLILTDDLIRDALRADKQAKAEAANQNEADEEE.

Belongs to the RimP family.

It is found in the cytoplasm. In terms of biological role, required for maturation of 30S ribosomal subunits. This is Ribosome maturation factor RimP from Rhizobium rhizogenes (strain K84 / ATCC BAA-868) (Agrobacterium radiobacter).